We begin with the raw amino-acid sequence, 281 residues long: Probable endonuclease 4 (281 aa).

9 residues coordinate Zn(2+): His-69, His-109, Glu-145, Asp-179, His-182, His-216, Asp-229, His-231, and Glu-261.

It belongs to the AP endonuclease 2 family. It depends on Zn(2+) as a cofactor.

It carries out the reaction Endonucleolytic cleavage to 5'-phosphooligonucleotide end-products.. In terms of biological role, endonuclease IV plays a role in DNA repair. It cleaves phosphodiester bonds at apurinic or apyrimidinic (AP) sites, generating a 3'-hydroxyl group and a 5'-terminal sugar phosphate. The sequence is that of Probable endonuclease 4 from Aeromonas hydrophila subsp. hydrophila (strain ATCC 7966 / DSM 30187 / BCRC 13018 / CCUG 14551 / JCM 1027 / KCTC 2358 / NCIMB 9240 / NCTC 8049).